The following is a 445-amino-acid chain: Tubulin beta-1 chain (445 aa).

Positions 11, 69, 138, 142, 143, 144, 204, and 226 each coordinate GTP. Glu69 contributes to the Mg(2+) binding site. Positions 426-445 are disordered; that stretch reads QDATAEDEEEYEDEEEEMAA. Positions 429 to 445 are enriched in acidic residues; that stretch reads TAEDEEEYEDEEEEMAA.

It belongs to the tubulin family. Dimer of alpha and beta chains. A typical microtubule is a hollow water-filled tube with an outer diameter of 25 nm and an inner diameter of 15 nM. Alpha-beta heterodimers associate head-to-tail to form protofilaments running lengthwise along the microtubule wall with the beta-tubulin subunit facing the microtubule plus end conferring a structural polarity. Microtubules usually have 13 protofilaments but different protofilament numbers can be found in some organisms and specialized cells. Requires Mg(2+) as cofactor.

It localises to the cytoplasm. The protein resides in the cytoskeleton. Its function is as follows. Tubulin is the major constituent of microtubules, a cylinder consisting of laterally associated linear protofilaments composed of alpha- and beta-tubulin heterodimers. Microtubules grow by the addition of GTP-tubulin dimers to the microtubule end, where a stabilizing cap forms. Below the cap, tubulin dimers are in GDP-bound state, owing to GTPase activity of alpha-tubulin. The polypeptide is Tubulin beta-1 chain (TUBB1) (Eleusine indica (Goosegrass)).